We begin with the raw amino-acid sequence, 613 residues long: Glutaminase 1 (613 aa).

The segment at 33-315 (GAVADYIPEL…LSSHYDLHML (283 aa)) is glutaminase. 7 residues coordinate substrate: S75, N124, E168, N175, Y199, Y251, and V269. Residues 345 to 457 (REILAAHEQE…LDTAIEWAED (113 aa)) enclose the STAS domain. 480-595 (LLEGLSADEL…ERIMRNLAQL (116 aa)) contributes to the a nucleoside 3',5'-cyclic phosphate binding site.

It belongs to the glutaminase family. In terms of assembly, homotetramer.

It catalyses the reaction L-glutamine + H2O = L-glutamate + NH4(+). This is Glutaminase 1 (glsA1) from Bradyrhizobium diazoefficiens (strain JCM 10833 / BCRC 13528 / IAM 13628 / NBRC 14792 / USDA 110).